Here is a 521-residue protein sequence, read N- to C-terminus: ATP synthase subunit beta (521 aa).

Low complexity-rich tracts occupy residues 1-21 (MAKA…AAKA) and 28-42 (PKTT…TKSG). Positions 1–42 (MAKAATPKTTAAAEAKPAAKAPAKKAAPKTTAAAKPAATKSG) are disordered. An ATP-binding site is contributed by 199-206 (GGAGVGKT).

It belongs to the ATPase alpha/beta chains family. F-type ATPases have 2 components, CF(1) - the catalytic core - and CF(0) - the membrane proton channel. CF(1) has five subunits: alpha(3), beta(3), gamma(1), delta(1), epsilon(1). CF(0) has three main subunits: a(1), b(2) and c(9-12). The alpha and beta chains form an alternating ring which encloses part of the gamma chain. CF(1) is attached to CF(0) by a central stalk formed by the gamma and epsilon chains, while a peripheral stalk is formed by the delta and b chains.

The protein resides in the cell inner membrane. The enzyme catalyses ATP + H2O + 4 H(+)(in) = ADP + phosphate + 5 H(+)(out). Produces ATP from ADP in the presence of a proton gradient across the membrane. The catalytic sites are hosted primarily by the beta subunits. This chain is ATP synthase subunit beta, found in Brucella canis (strain ATCC 23365 / NCTC 10854 / RM-666).